Reading from the N-terminus, the 361-residue chain is Queuine tRNA-ribosyltransferase (361 aa).

Catalysis depends on aspartate 92, which acts as the Proton acceptor. Substrate-binding positions include 92–96, aspartate 146, glutamine 189, and glycine 216; that span reads DSGGF. The RNA binding stretch occupies residues 247 to 253; the sequence is GVGKPVD. Aspartate 266 serves as the catalytic Nucleophile. Residues 271 to 275 form an RNA binding; important for wobble base 34 recognition region; that stretch reads TRSGR. Zn(2+)-binding residues include cysteine 304, cysteine 306, cysteine 309, and histidine 335.

The protein belongs to the queuine tRNA-ribosyltransferase family. In terms of assembly, homodimer. Within each dimer, one monomer is responsible for RNA recognition and catalysis, while the other monomer binds to the replacement base PreQ1. The cofactor is Zn(2+).

It catalyses the reaction 7-aminomethyl-7-carbaguanine + guanosine(34) in tRNA = 7-aminomethyl-7-carbaguanosine(34) in tRNA + guanine. It functions in the pathway tRNA modification; tRNA-queuosine biosynthesis. In terms of biological role, catalyzes the base-exchange of a guanine (G) residue with the queuine precursor 7-aminomethyl-7-deazaguanine (PreQ1) at position 34 (anticodon wobble position) in tRNAs with GU(N) anticodons (tRNA-Asp, -Asn, -His and -Tyr). Catalysis occurs through a double-displacement mechanism. The nucleophile active site attacks the C1' of nucleotide 34 to detach the guanine base from the RNA, forming a covalent enzyme-RNA intermediate. The proton acceptor active site deprotonates the incoming PreQ1, allowing a nucleophilic attack on the C1' of the ribose to form the product. After dissociation, two additional enzymatic reactions on the tRNA convert PreQ1 to queuine (Q), resulting in the hypermodified nucleoside queuosine (7-(((4,5-cis-dihydroxy-2-cyclopenten-1-yl)amino)methyl)-7-deazaguanosine). The protein is Queuine tRNA-ribosyltransferase of Rickettsia africae (strain ESF-5).